The sequence spans 516 residues: Membrane-bound transcription factor site-2 protease (516 aa).

At 1–3 the chain is on the cytoplasmic side; sequence MIP. A helical transmembrane segment spans residues 4–24; sequence VSLVVVVVGGWTAVYLTDLVL. At 25–74 the chain is on the lumenal side; that stretch reads KSSVYFKHSYEDWLENNGLSISPFHIRWQTAVFNRAFYSWGRRKARMLYQ. The next 2 helical transmembrane spans lie at 75 to 95 and 96 to 107; these read WFNF…FLLG and KTLIQTLGQMMA. The Lumenal portion of the chain corresponds to 108–141; it reads DSSYSSSSSSSSHSSSSSSSSSSSSSLYNEQVLQ. A helical transmembrane segment spans residues 142–166; sequence VVVPGINLPVNQLTYFFAAVLISGV. His168 contributes to the Zn(2+) binding site. Glu169 is an active-site residue. The next 3 membrane-spanning stretches (helical) occupy residues 171-183, 184-206, and 226-248; these read GHGI…QVRF, NGFG…TTHL, and FILA…PFYY. His172 contacts Zn(2+). Residues 249-443 lie on the Lumenal side of the membrane; sequence TGVGVLITEV…LPVVVETFVK (195 aa). The N-linked (GlcNAc...) asparagine glycan is linked to Asn334. Helical transmembrane passes span 444 to 461 and 462 to 473; these read YLIS…VPCF and ALDGQWILNSFL. The Lumenal portion of the chain corresponds to 474-489; sequence DATLTSVIGDNDVKDL. A helical membrane pass occupies residues 490–510; the sequence is IGFFILLGGSILLAANVALGL. Over 511–516 the chain is Cytoplasmic; sequence WMVTAR.

The protein belongs to the peptidase M50A family. Requires Zn(2+) as cofactor.

Its subcellular location is the membrane. It is found in the cytoplasm. The protein localises to the golgi apparatus membrane. It catalyses the reaction Cleaves several transcription factors that are type-2 transmembrane proteins within membrane-spanning domains. Known substrates include sterol regulatory element-binding protein (SREBP) -1, SREBP-2 and forms of the transcriptional activator ATF6. SREBP-2 is cleaved at the site 477-DRSRILL-|-CVLTFLCLSFNPLTSLLQWGGA-505. The residues Asn-Pro, 11 residues distal to the site of cleavage in the membrane-spanning domain, are important for cleavage by S2P endopeptidase. Replacement of either of these residues does not prevent cleavage, but there is no cleavage if both of these residues are replaced.. Its function is as follows. Zinc metalloprotease that mediates intramembrane proteolysis of proteins such as ATF6, ATF6B, SREBF1/SREBP1 and SREBF2/SREBP2. Catalyzes the second step in the proteolytic activation of the sterol regulatory element-binding proteins (SREBPs) SREBF1/SREBP1 and SREBF2/SREBP2: cleaves SREBPs within the first transmembrane segment, thereby releasing the N-terminal segment with a portion of the transmembrane segment attached. Mature N-terminal SREBP fragments shuttle to the nucleus and activate gene transcription. Also mediates the second step in the proteolytic activation of the cyclic AMP-dependent transcription factor ATF-6 (ATF6 and ATF6B). Involved in intramembrane proteolysis during bone formation. In astrocytes and osteoblasts, upon DNA damage and ER stress, mediates the second step of the regulated intramembrane proteolytic activation of the transcription factor CREB3L1, leading to the inhibition of cell-cycle progression. This Bos taurus (Bovine) protein is Membrane-bound transcription factor site-2 protease.